Here is a 218-residue protein sequence, read N- to C-terminus: Ribose-5-phosphate isomerase A (218 aa).

Residues 28 to 31 (TGST), 81 to 84 (DGAD), and 94 to 97 (KGGG) each bind substrate. Catalysis depends on Glu-103, which acts as the Proton acceptor. A substrate-binding site is contributed by Lys-121.

This sequence belongs to the ribose 5-phosphate isomerase family. In terms of assembly, homodimer.

The catalysed reaction is aldehydo-D-ribose 5-phosphate = D-ribulose 5-phosphate. The protein operates within carbohydrate degradation; pentose phosphate pathway; D-ribose 5-phosphate from D-ribulose 5-phosphate (non-oxidative stage): step 1/1. Functionally, catalyzes the reversible conversion of ribose-5-phosphate to ribulose 5-phosphate. The sequence is that of Ribose-5-phosphate isomerase A from Psychromonas ingrahamii (strain DSM 17664 / CCUG 51855 / 37).